A 442-amino-acid chain; its full sequence is Radical S-adenosyl methionine domain-containing protein 1, mitochondrial (442 aa).

A mitochondrion-targeting transit peptide spans 1-22 (MALPRSQARGWVKAAKMAQRRR). The interval 1-37 (MALPRSQARGWVKAAKMAQRRRPADDTGGPQSPAPGS) is disordered. A Radical SAM core domain is found at 34-270 (APGSQRAALY…RAVLREAGFR (237 aa)). Tyrosine 43 contacts S-adenosyl-L-methionine. 3 residues coordinate [4Fe-4S] cluster: cysteine 49, cysteine 53, and cysteine 56. S-adenosyl-L-methionine-binding positions include glycine 98, 99 to 100 (GT), glutamate 131, glutamine 158, arginine 170, and aspartate 195.

It belongs to the anaerobic coproporphyrinogen-III oxidase family. HemW subfamily. It depends on [4Fe-4S] cluster as a cofactor.

Its subcellular location is the mitochondrion. May be a heme chaperone, appears to bind heme. Homologous bacterial proteins do not have oxygen-independent coproporphyrinogen-III oxidase activity. Binds 1 [4Fe-4S] cluster. The cluster is coordinated with 3 cysteines and an exchangeable S-adenosyl-L-methionine. This chain is Radical S-adenosyl methionine domain-containing protein 1, mitochondrial (RSAD1), found in Bos taurus (Bovine).